The chain runs to 764 residues: 1,4-alpha-glucan branching enzyme GlgB (764 aa).

The active-site Nucleophile is the aspartate 431. The Proton donor role is filled by glutamate 484.

This sequence belongs to the glycosyl hydrolase 13 family. GlgB subfamily. In terms of assembly, monomer.

It catalyses the reaction Transfers a segment of a (1-&gt;4)-alpha-D-glucan chain to a primary hydroxy group in a similar glucan chain.. It participates in glycan biosynthesis; glycogen biosynthesis. In terms of biological role, catalyzes the formation of the alpha-1,6-glucosidic linkages in glycogen by scission of a 1,4-alpha-linked oligosaccharide from growing alpha-1,4-glucan chains and the subsequent attachment of the oligosaccharide to the alpha-1,6 position. This chain is 1,4-alpha-glucan branching enzyme GlgB, found in Synechococcus sp. (strain CC9902).